Here is a 267-residue protein sequence, read N- to C-terminus: Chlorophyll a-b binding protein 3B, chloroplastic (267 aa).

The transit peptide at 1–34 directs the protein to the chloroplast; that stretch reads MAASTMALSSSTFAGKAVKLSPSSSEISGNGRIT. Positions 19-52 are disordered; that stretch reads KLSPSSSEISGNGRITMRKTAAKPKPASSGSPWX. Residues 153-173 form a helical membrane-spanning segment; it reads LVHAQSILAIWACQVVLMGAV. Chlorophyll b-binding residues include valine 154, serine 158, glutamine 166, glutamate 174, arginine 177, and leucine 183. The chlorophyll a site is built by lysine 214, glutamate 215, asparagine 218, arginine 220, glutamine 232, histidine 247, and alanine 256. A helical transmembrane segment spans residues 221-241; the sequence is LAMFSMFGFFVQAIVTGKGPL. Residue phenylalanine 263 participates in chlorophyll b binding.

It belongs to the light-harvesting chlorophyll a/b-binding (LHC) protein family. The LHC complex consists of chlorophyll a-b binding proteins. Requires Binds at least 14 chlorophylls (8 Chl-a and 6 Chl-b) and carotenoids such as lutein and neoxanthin. as cofactor. Post-translationally, photoregulated by reversible phosphorylation of its threonine residues.

The protein resides in the plastid. Its subcellular location is the chloroplast thylakoid membrane. The light-harvesting complex (LHC) functions as a light receptor, it captures and delivers excitation energy to photosystems with which it is closely associated. This is Chlorophyll a-b binding protein 3B, chloroplastic (CAB3B) from Solanum lycopersicum (Tomato).